Here is a 179-residue protein sequence, read N- to C-terminus: Large ribosomal subunit protein uL5 (179 aa).

Belongs to the universal ribosomal protein uL5 family. Part of the 50S ribosomal subunit; part of the 5S rRNA/L5/L18/L25 subcomplex. Contacts the 5S rRNA and the P site tRNA. Forms a bridge to the 30S subunit in the 70S ribosome.

Its function is as follows. This is one of the proteins that bind and probably mediate the attachment of the 5S RNA into the large ribosomal subunit, where it forms part of the central protuberance. In the 70S ribosome it contacts protein S13 of the 30S subunit (bridge B1b), connecting the 2 subunits; this bridge is implicated in subunit movement. Contacts the P site tRNA; the 5S rRNA and some of its associated proteins might help stabilize positioning of ribosome-bound tRNAs. The sequence is that of Large ribosomal subunit protein uL5 from Listeria innocua serovar 6a (strain ATCC BAA-680 / CLIP 11262).